The primary structure comprises 259 residues: Thiamine thiazole synthase (259 aa).

Residues A33, 52–53 (ER), G60, V124, and 152–154 (HVD) contribute to the NAD(+) site. Fe cation-binding residues include D154 and H169. M219 contributes to the NAD(+) binding site. Position 229 (R229) interacts with glycine.

Belongs to the THI4 family. As to quaternary structure, homooctamer; tetramer of dimers. Fe(2+) serves as cofactor.

It catalyses the reaction hydrogen sulfide + glycine + NAD(+) = ADP-5-ethyl-4-methylthiazole-2-carboxylate + nicotinamide + 3 H2O + H(+). It functions in the pathway cofactor biosynthesis; thiamine diphosphate biosynthesis. Involved in the biosynthesis of the thiazole moiety of thiamine. Catalyzes the conversion of NAD and glycine to adenosine diphosphate 5-(2-hydroxyethyl)-4-methylthiazole-2-carboxylate (ADT), an adenylated thiazole intermediate, using free sulfide as a source of sulfur. This chain is Thiamine thiazole synthase, found in Pyrobaculum neutrophilum (strain DSM 2338 / JCM 9278 / NBRC 100436 / V24Sta) (Thermoproteus neutrophilus).